We begin with the raw amino-acid sequence, 568 residues long: Proline--tRNA ligase (568 aa).

Belongs to the class-II aminoacyl-tRNA synthetase family. ProS type 1 subfamily. In terms of assembly, homodimer.

Its subcellular location is the cytoplasm. It carries out the reaction tRNA(Pro) + L-proline + ATP = L-prolyl-tRNA(Pro) + AMP + diphosphate. In terms of biological role, catalyzes the attachment of proline to tRNA(Pro) in a two-step reaction: proline is first activated by ATP to form Pro-AMP and then transferred to the acceptor end of tRNA(Pro). As ProRS can inadvertently accommodate and process non-cognate amino acids such as alanine and cysteine, to avoid such errors it has two additional distinct editing activities against alanine. One activity is designated as 'pretransfer' editing and involves the tRNA(Pro)-independent hydrolysis of activated Ala-AMP. The other activity is designated 'posttransfer' editing and involves deacylation of mischarged Ala-tRNA(Pro). The misacylated Cys-tRNA(Pro) is not edited by ProRS. This is Proline--tRNA ligase from Alkalilimnicola ehrlichii (strain ATCC BAA-1101 / DSM 17681 / MLHE-1).